Here is a 302-residue protein sequence, read N- to C-terminus: Aspartate carbamoyltransferase catalytic subunit (302 aa).

The carbamoyl phosphate site is built by arginine 53 and threonine 54. Lysine 82 provides a ligand contact to L-aspartate. Carbamoyl phosphate-binding residues include arginine 103, histidine 131, and glutamine 134. The L-aspartate site is built by arginine 164 and arginine 223. Residues leucine 260 and proline 261 each coordinate carbamoyl phosphate.

This sequence belongs to the aspartate/ornithine carbamoyltransferase superfamily. ATCase family. Heterooligomer of catalytic and regulatory chains.

It carries out the reaction carbamoyl phosphate + L-aspartate = N-carbamoyl-L-aspartate + phosphate + H(+). It participates in pyrimidine metabolism; UMP biosynthesis via de novo pathway; (S)-dihydroorotate from bicarbonate: step 2/3. Catalyzes the condensation of carbamoyl phosphate and aspartate to form carbamoyl aspartate and inorganic phosphate, the committed step in the de novo pyrimidine nucleotide biosynthesis pathway. The polypeptide is Aspartate carbamoyltransferase catalytic subunit (Methanococcus maripaludis (strain C7 / ATCC BAA-1331)).